We begin with the raw amino-acid sequence, 268 residues long: HTH-type transcriptional activator RhaS (268 aa).

The region spanning 171–268 (RQMIRWLENN…YSIAPRELRI (98 aa)) is the HTH araC/xylS-type domain. DNA-binding regions (H-T-H motif) lie at residues 188–209 (EELA…KSQT) and 236–259 (IINI…KNEY).

As to quaternary structure, binds DNA as a dimer.

Its subcellular location is the cytoplasm. Its function is as follows. Activates expression of the rhaBAD and rhaT operons. This Mannheimia succiniciproducens (strain KCTC 0769BP / MBEL55E) protein is HTH-type transcriptional activator RhaS.